The chain runs to 139 residues: Low molecular weight protein-tyrosine-phosphatase PtpB (139 aa).

Cys7 acts as the Nucleophile in catalysis. The active site involves Arg13. The active-site Proton donor is Asp111.

This sequence belongs to the low molecular weight phosphotyrosine protein phosphatase family.

The enzyme catalyses O-phospho-L-tyrosyl-[protein] + H2O = L-tyrosyl-[protein] + phosphate. With respect to regulation, inhibited by N-ethylmaleimide and sodium orthovanadate. Its function is as follows. Dephosphorylates the phosphotyrosine-containing proteins. In Staphylococcus aureus, this protein is Low molecular weight protein-tyrosine-phosphatase PtpB (ptpB).